Here is a 438-residue protein sequence, read N- to C-terminus: UDP-N-acetylmuramoylalanine--D-glutamate ligase (438 aa).

112–118 (GSNGKST) is an ATP binding site.

This sequence belongs to the MurCDEF family.

The protein resides in the cytoplasm. The enzyme catalyses UDP-N-acetyl-alpha-D-muramoyl-L-alanine + D-glutamate + ATP = UDP-N-acetyl-alpha-D-muramoyl-L-alanyl-D-glutamate + ADP + phosphate + H(+). Its pathway is cell wall biogenesis; peptidoglycan biosynthesis. Functionally, cell wall formation. Catalyzes the addition of glutamate to the nucleotide precursor UDP-N-acetylmuramoyl-L-alanine (UMA). In Yersinia pestis bv. Antiqua (strain Antiqua), this protein is UDP-N-acetylmuramoylalanine--D-glutamate ligase.